The following is a 360-amino-acid chain: Chorismate synthase (360 aa).

Arg48 is a binding site for NADP(+). Residues 125–127 (RSS), 242–243 (NA), Gly286, 301–305 (KPTSS), and Arg327 each bind FMN.

Belongs to the chorismate synthase family. Homotetramer. It depends on FMNH2 as a cofactor.

The enzyme catalyses 5-O-(1-carboxyvinyl)-3-phosphoshikimate = chorismate + phosphate. It functions in the pathway metabolic intermediate biosynthesis; chorismate biosynthesis; chorismate from D-erythrose 4-phosphate and phosphoenolpyruvate: step 7/7. In terms of biological role, catalyzes the anti-1,4-elimination of the C-3 phosphate and the C-6 proR hydrogen from 5-enolpyruvylshikimate-3-phosphate (EPSP) to yield chorismate, which is the branch point compound that serves as the starting substrate for the three terminal pathways of aromatic amino acid biosynthesis. This reaction introduces a second double bond into the aromatic ring system. The sequence is that of Chorismate synthase from Pelagibacter ubique (strain HTCC1062).